The primary structure comprises 463 residues: ATP sulfurylase 1, chloroplastic (463 aa).

Residues 1 to 48 constitute a chloroplast transit peptide; sequence MASMAAVLSKTPFLSQPLTKSSPNSDLPFAAVSFPSKSLRRRVGSIRA.

It belongs to the sulfate adenylyltransferase family. In terms of assembly, homotetramer.

Its subcellular location is the plastid. It localises to the chloroplast stroma. The enzyme catalyses sulfate + ATP + H(+) = adenosine 5'-phosphosulfate + diphosphate. It participates in sulfur metabolism; hydrogen sulfide biosynthesis; sulfite from sulfate: step 1/3. Mediates selenate (Se) reduction, and promotes Se and sulfur (S) uptake and assimilation. This is ATP sulfurylase 1, chloroplastic (APS1) from Arabidopsis thaliana (Mouse-ear cress).